Here is a 140-residue protein sequence, read N- to C-terminus: MGRISGLVPSRFLTLLAHLVIVITLFWSRESNIQACLPLKFTPEEYEKQDNQLVAALCLTLGLFAVELAGFLSGVSMFNSTQSLLSIAAHCSASVALSFFIFERWECTTYWYIFAFCSAFPAVTETALFIAVFGLKKKPF.

A run of 2 helical transmembrane segments spans residues 7-27 and 53-73; these read LVPSRFLTLLAHLVIVITLFW and LVAALCLTLGLFAVELAGFLS. The N-linked (GlcNAc...) asparagine glycan is linked to asparagine 79. 2 consecutive transmembrane segments (helical) span residues 83 to 103 and 113 to 133; these read SLLSIAAHCSASVALSFFIFE and IFAFCSAFPAVTETALFIAVF.

Part of the tectonic-like complex (also named B9 complex). Interacts with TMEM237, TMEM231, MKS1 and TMEM216.

Its subcellular location is the membrane. It localises to the cell projection. The protein resides in the cilium. Functionally, plays a role in cilia formation and embryonic patterning. Requires for normal Sonic hedgehog (Shh) signaling in the neural tube and acts in combination with GLI2 and GLI3 to pattern ventral and intermediate neuronal cell types. During ciliogenesis regulates the ciliary transition zone localization of some MKS complex proteins. This chain is Transmembrane protein 107, found in Rattus norvegicus (Rat).